Here is a 461-residue protein sequence, read N- to C-terminus: Putative forkhead-related transcription factor fkh-5 (461 aa).

The segment at residues 171 to 262 (QRPQLSYQLL…VEKEMIDVKT (92 aa)) is a DNA-binding region (fork-head).

It is found in the nucleus. Transcription factor. Binds to DNA sequence motif 5'-CTGTTTCA-3'. Regulates expression of a class of small RNAs, known as 21U-RNAs, perhaps acting redundantly with fkh-4 and fkh-3. This is Putative forkhead-related transcription factor fkh-5 (fkh-5) from Caenorhabditis elegans.